A 505-amino-acid chain; its full sequence is Cytochrome P450 monooxygenase iliC (505 aa).

The chain crosses the membrane as a helical span at residues 6–26 (LIAQHSLTLTIASSVLLVFLL). Heme is bound at residue Cys-453.

This sequence belongs to the cytochrome P450 family. Heme serves as cofactor.

The protein localises to the membrane. It carries out the reaction (3E,5S)-3-[(2E,4E,8S,10E,12Z)-1-hydroxy-4,8-dimethyltetradeca-2,4,10,12-tetraen-1-ylidene]-5-[(4-hydroxyphenyl)methyl]pyrrolidine-2,4-dione + reduced [NADPH--hemoprotein reductase] + O2 = 3-[(2E,4E,8S,10E,12Z)-4,8-dimethyltetradeca-2,4,10,12-tetraenoyl]-4-hydroxy-5-(4-hydroxyphenyl)-1,2-dihydropyridin-2-one + oxidized [NADPH--hemoprotein reductase] + 2 H2O. Its pathway is mycotoxin biosynthesis. In terms of biological role, cytochrome P450 monooxygenase; part of the gene cluster that mediates the biosynthesis of ilicicolin H, a 4-hydroxy-2-pyridonealkaloid that has potent and broad antifungal activities by inhibiting the mitochondrial respiration chain. IliC catalyzes the ring expansion of the tetramate intermediate to the acyclic 2-pyridone intermediate that contains the trans bis-diene chain. The biosynthesis of ilicicolin H starts with formation of the tetramic acid by the hybrid PKS-NRPS synthetase iliA with the partnering trans-enoyl reductase iliB since iliA lacks a designated enoylreductase (ER) domain. The cytochrome P450 monooxygenase iliC then catalyzes the ring expansion of the tetramate to the acyclic 2-pyridone. The pericyclase iliD further converts the acyclic 2-pyridone into 8-epi-ilicicolin H. 8-epi-ilicicolin H might then spontaneously convert to ilicicolin H since ilicicolin H is produced in the absence of the epimerase iliE, in contrast to what was observed for the Talaromyces variabilis ilicolin H biosynthetic pathway. This Neonectria sp. (strain DH2) protein is Cytochrome P450 monooxygenase iliC.